The chain runs to 572 residues: 2-isopropylmalate synthase (572 aa).

The Pyruvate carboxyltransferase domain maps to 31–305 (PIWMSTDLRD…DPGLDFSNIN (275 aa)). Mg(2+)-binding residues include D40, H244, H246, and N280. The segment at 437 to 572 (NATPVHYVGH…MNDATESVGV (136 aa)) is regulatory domain.

Belongs to the alpha-IPM synthase/homocitrate synthase family. LeuA type 2 subfamily. As to quaternary structure, homodimer. It depends on Mg(2+) as a cofactor.

The protein resides in the cytoplasm. It catalyses the reaction 3-methyl-2-oxobutanoate + acetyl-CoA + H2O = (2S)-2-isopropylmalate + CoA + H(+). It functions in the pathway amino-acid biosynthesis; L-leucine biosynthesis; L-leucine from 3-methyl-2-oxobutanoate: step 1/4. Functionally, catalyzes the condensation of the acetyl group of acetyl-CoA with 3-methyl-2-oxobutanoate (2-ketoisovalerate) to form 3-carboxy-3-hydroxy-4-methylpentanoate (2-isopropylmalate). This chain is 2-isopropylmalate synthase, found in Paraburkholderia xenovorans (strain LB400).